Here is a 285-residue protein sequence, read N- to C-terminus: Guanylate kinase 2, chloroplastic/mitochondrial (285 aa).

Over residues 1–19 (MLLTRRFSSALARSPLLPR) the composition is skewed to low complexity. The N-terminal 42 residues, 1–42 (MLLTRRFSSALARSPLLPRSLPPPRAVPATPPAPRPPPRRLM), are a transit peptide targeting the chloroplast and mitochondrion. Positions 1–66 (MLLTRRFSSA…PPPPSGADKD (66 aa)) are disordered. Residues 20 to 36 (SLPPPRAVPATPPAPRP) show a composition bias toward pro residues. Over residues 40 to 50 (RLMSSSSSGWH) the composition is skewed to low complexity. A Guanylate kinase-like domain is found at 91–272 (PMILVISGPS…AVKQVESIID (182 aa)). Residue 98-105 (GPSGVGKD) participates in ATP binding. Catalysis depends on residues arginine 130, arginine 224, and arginine 235. ATP is bound at residue asparagine 255.

Belongs to the guanylate kinase family. In terms of assembly, monomer.

The protein localises to the plastid. It is found in the chloroplast. The protein resides in the mitochondrion. The enzyme catalyses GMP + ATP = GDP + ADP. Essential for recycling GMP and indirectly, cGMP. Essential for chloroplast differentiation at early stage of leaf development. May not be involved in the synthesis and maintenance of the organellar DNA during leaf development. In Oryza sativa subsp. japonica (Rice), this protein is Guanylate kinase 2, chloroplastic/mitochondrial (V2).